Consider the following 181-residue polypeptide: Ubiquitin-conjugating enzyme E2 19 (181 aa).

Polar residues predominate over residues 1-10 (MATVNGYTGN). A disordered region spans residues 1 to 33 (MATVNGYTGNTPAATTPAATGSKQSAPPTKTVD). Residues 11–20 (TPAATTPAAT) are compositionally biased toward low complexity. Positions 36–181 (SVLKRLQSEL…VEKLYKPLNA (146 aa)) constitute a UBC core domain. Cys-120 functions as the Glycyl thioester intermediate in the catalytic mechanism.

It belongs to the ubiquitin-conjugating enzyme family. Interacts with OR. Binds to LOT1. Expressed in all tissues with cell division activities and in mature leaves.

The protein localises to the cytoplasm. It is found in the nucleus. The enzyme catalyses S-ubiquitinyl-[E1 ubiquitin-activating enzyme]-L-cysteine + [E2 ubiquitin-conjugating enzyme]-L-cysteine = [E1 ubiquitin-activating enzyme]-L-cysteine + S-ubiquitinyl-[E2 ubiquitin-conjugating enzyme]-L-cysteine.. It functions in the pathway protein modification; protein ubiquitination. In terms of biological role, accepts the ubiquitin from the E1 complex and catalyzes its covalent attachment to other proteins. Part of the anaphase-promoting complex (APC). May have a key function during cell cycle and be involved in cyclin B1 degradation. Triggers OR ubiquitination that mediates its subsequent nuclear localization. Involved in the repression of early light-induced proteins (ELIPs, e.g. ELIP1 and ELIP2) expression, probably via OR nuclear relocalization. The sequence is that of Ubiquitin-conjugating enzyme E2 19 from Arabidopsis thaliana (Mouse-ear cress).